The following is a 102-amino-acid chain: NADH-quinone oxidoreductase subunit K (102 aa).

3 helical membrane passes run 5–25, 30–50, and 62–82; these read LAHYLAVAAILFTIGVFGIFV, IIVILMSIELILLAVNINLVA, and IFAMFVLTVAAAEAAVGLAIL.

It belongs to the complex I subunit 4L family. As to quaternary structure, NDH-1 is composed of 14 different subunits. Subunits NuoA, H, J, K, L, M, N constitute the membrane sector of the complex.

It localises to the cell inner membrane. The enzyme catalyses a quinone + NADH + 5 H(+)(in) = a quinol + NAD(+) + 4 H(+)(out). In terms of biological role, NDH-1 shuttles electrons from NADH, via FMN and iron-sulfur (Fe-S) centers, to quinones in the respiratory chain. The immediate electron acceptor for the enzyme in this species is believed to be ubiquinone. Couples the redox reaction to proton translocation (for every two electrons transferred, four hydrogen ions are translocated across the cytoplasmic membrane), and thus conserves the redox energy in a proton gradient. In Phenylobacterium zucineum (strain HLK1), this protein is NADH-quinone oxidoreductase subunit K.